The following is a 472-amino-acid chain: Chromosomal replication initiator protein DnaA (472 aa).

The interval 1 to 73 (MSNMEHDRWS…LTCWQAELPE (73 aa)) is domain I, interacts with DnaA modulators. A domain II region spans residues 73–128 (EVCRIDLTVRSPMRAAVAKEAAAPVEHRRAEHRPATETRSHATVPASSNHDALGGS). The disordered stretch occupies residues 92-127 (EAAAPVEHRRAEHRPATETRSHATVPASSNHDALGG). Residues 97–112 (VEHRRAEHRPATETRS) show a composition bias toward basic and acidic residues. Positions 129 to 351 (PLDPRLTFAS…GAINRLLAHS (223 aa)) are domain III, AAA+ region. ATP is bound by residues G176, G178, K179, and T180. The domain IV, binds dsDNA stretch occupies residues 352-472 (KLNAQPVTLE…VDSLKRQLQE (121 aa)).

The protein belongs to the DnaA family. As to quaternary structure, oligomerizes as a right-handed, spiral filament on DNA at oriC.

It localises to the cytoplasm. Its function is as follows. Plays an essential role in the initiation and regulation of chromosomal replication. ATP-DnaA binds to the origin of replication (oriC) to initiate formation of the DNA replication initiation complex once per cell cycle. Binds the DnaA box (a 9 base pair repeat at the origin) and separates the double-stranded (ds)DNA. Forms a right-handed helical filament on oriC DNA; dsDNA binds to the exterior of the filament while single-stranded (ss)DNA is stabiized in the filament's interior. The ATP-DnaA-oriC complex binds and stabilizes one strand of the AT-rich DNA unwinding element (DUE), permitting loading of DNA polymerase. After initiation quickly degrades to an ADP-DnaA complex that is not apt for DNA replication. Binds acidic phospholipids. In Rhodopseudomonas palustris (strain HaA2), this protein is Chromosomal replication initiator protein DnaA.